A 286-amino-acid chain; its full sequence is Probable ketoamine kinase EAE_16955 (286 aa).

92 to 94 (EYL) provides a ligand contact to ATP. Asp-194 (proton acceptor) is an active-site residue.

Belongs to the fructosamine kinase family.

Functionally, ketoamine kinase that phosphorylates ketoamines on the third carbon of the sugar moiety to generate ketoamine 3-phosphate. The sequence is that of Probable ketoamine kinase EAE_16955 from Klebsiella aerogenes (strain ATCC 13048 / DSM 30053 / CCUG 1429 / JCM 1235 / KCTC 2190 / NBRC 13534 / NCIMB 10102 / NCTC 10006 / CDC 819-56) (Enterobacter aerogenes).